A 378-amino-acid chain; its full sequence is Quinolinate synthase (378 aa).

2 residues coordinate iminosuccinate: His59 and Ser80. Cys125 contacts [4Fe-4S] cluster. Iminosuccinate is bound by residues Tyr151–Asn153 and Ser168. Residue Cys212 coordinates [4Fe-4S] cluster. Iminosuccinate-binding positions include His238–Glu240 and Thr255. Residue Cys309 participates in [4Fe-4S] cluster binding.

The protein belongs to the quinolinate synthase family. Type 1 subfamily. Requires [4Fe-4S] cluster as cofactor.

Its subcellular location is the cytoplasm. It carries out the reaction iminosuccinate + dihydroxyacetone phosphate = quinolinate + phosphate + 2 H2O + H(+). It functions in the pathway cofactor biosynthesis; NAD(+) biosynthesis; quinolinate from iminoaspartate: step 1/1. Functionally, catalyzes the condensation of iminoaspartate with dihydroxyacetone phosphate to form quinolinate. The sequence is that of Quinolinate synthase from Burkholderia lata (strain ATCC 17760 / DSM 23089 / LMG 22485 / NCIMB 9086 / R18194 / 383).